The primary structure comprises 318 residues: Probable tyrosine phosphatase protein N1 (318 aa).

Residues 26-292 (IVRLEHHQVI…LILQPGYYVL (267 aa)) enclose the Tyrosine-protein phosphatase domain. Residue Cys-233 is the Phosphocysteine intermediate of the active site.

Belongs to the protein-tyrosine phosphatase family.

It carries out the reaction O-phospho-L-tyrosyl-[protein] + H2O = L-tyrosyl-[protein] + phosphate. The polypeptide is Probable tyrosine phosphatase protein N1 (N3) (Microplitis demolitor bracovirus (isolate Webb) (MdBV)).